Consider the following 637-residue polypeptide: Chaperone protein HtpG (637 aa).

The interval M1–R348 is a; substrate-binding. Residues E349–K565 are b. Residues L566 to A637 are c.

Belongs to the heat shock protein 90 family. In terms of assembly, homodimer.

It is found in the cytoplasm. Its function is as follows. Molecular chaperone. Has ATPase activity. The sequence is that of Chaperone protein HtpG from Idiomarina loihiensis (strain ATCC BAA-735 / DSM 15497 / L2-TR).